The primary structure comprises 129 residues: Lysozyme C-1 (129 aa).

Positions 1–129 constitute a C-type lysozyme domain; it reads KVFERCELAR…VSSYVEGCTL (129 aa). Cystine bridges form between cysteine 6–cysteine 127, cysteine 30–cysteine 115, cysteine 65–cysteine 81, and cysteine 77–cysteine 95. Catalysis depends on residues glutamate 35 and aspartate 53.

The protein belongs to the glycosyl hydrolase 22 family. Monomer.

The enzyme catalyses Hydrolysis of (1-&gt;4)-beta-linkages between N-acetylmuramic acid and N-acetyl-D-glucosamine residues in a peptidoglycan and between N-acetyl-D-glucosamine residues in chitodextrins.. In terms of biological role, lysozymes have primarily a bacteriolytic function; those in tissues and body fluids are associated with the monocyte-macrophage system and enhance the activity of immunoagents. In Capra hircus (Goat), this protein is Lysozyme C-1.